A 104-amino-acid polypeptide reads, in one-letter code: Large ribosomal subunit protein bL21 (104 aa).

The protein belongs to the bacterial ribosomal protein bL21 family. In terms of assembly, part of the 50S ribosomal subunit. Contacts protein L20.

This protein binds to 23S rRNA in the presence of protein L20. The polypeptide is Large ribosomal subunit protein bL21 (Helicobacter hepaticus (strain ATCC 51449 / 3B1)).